Here is a 578-residue protein sequence, read N- to C-terminus: Signal peptide peptidase-like 2B (578 aa).

Positions 1–19 (MAAARLAAALLLLAAQVAC) are cleaved as a signal peptide. Residues 20–168 (EFGVLRVVSQ…APSEPVMDYN (149 aa)) are Lumenal-facing. The 85-residue stretch at 61–145 (LRDLSTTQLC…LLSHRDLQDI (85 aa)) folds into the PA domain. N-linked (GlcNAc...) asparagine glycosylation is found at Asn91 and Asn123. The chain crosses the membrane as a helical span at residues 169–189 (MVIIFVMAVGTVAIGGYWAGS). Over 190-216 (HDVKKYMKHKRDDGPEKQEDEAVDVTP) the chain is Cytoplasmic. A helical membrane pass occupies residues 217–237 (VMICVFVVMCCFMLVLLYYFY). Over 238 to 239 (DR) the chain is Lumenal. Residues 240–260 (LVYVIIGIFCLASSTGLYSCL) traverse the membrane as a helical segment. Over 261–286 (APFVRKLPFCTCRVPDNNLPYFHKRP) the chain is Cytoplasmic. A helical membrane pass occupies residues 287-307 (QARMLLLALFCVTVSVVWGIF). Topologically, residues 308-312 (RNEDQ) are lumenal. The helical transmembrane segment at 313-333 (WAWVLQDTLGIAFCLYMLKTI) threads the bilayer. Residues 334 to 341 (RLPTFKAC) lie on the Cytoplasmic side of the membrane. Residues 342–362 (TLLLLVLFIYDIFFVFITPFL) form a helical membrane-spanning segment. Asp352 is a catalytic residue. Topologically, residues 363-405 (TKSGNSIMVEVATGPSNSSTHEKLPMVLKVPRLNTSPLSLCDR) are lumenal. Residues 406-426 (PFSLLGFGDILVPGLLVAYCH) traverse the membrane as a helical segment. The active site involves Asp414. Over 427-438 (RFDIQVQSSRIY) the chain is Cytoplasmic. Residues 439-459 (FVACTIAYGLGLLVTFVALVL) traverse the membrane as a helical segment. Topologically, residues 460–463 (MQRG) are lumenal. The chain crosses the membrane as a helical span at residues 464 to 484 (QPALLYLVPCTLLTSCTVALW). The PAL motif lies at 465–467 (PAL). The Cytoplasmic segment spans residues 485 to 578 (RRELGAFWTG…IPVVKPETSA (94 aa)). Positions 502 to 578 (PQTPWAATQG…IPVVKPETSA (77 aa)) are disordered. The span at 520–529 (SSLSEQPPSE) shows a compositional bias: low complexity.

The protein belongs to the peptidase A22B family. As to quaternary structure, monomer. Homodimer. Interacts with ITM2B and TNF. In terms of processing, glycosylated.

The protein localises to the cell membrane. It localises to the golgi apparatus membrane. It is found in the lysosome membrane. The protein resides in the endosome membrane. Its subcellular location is the membrane. Its function is as follows. Intramembrane-cleaving aspartic protease (I-CLiP) that cleaves type II membrane signal peptides in the hydrophobic plane of the membrane. Functions in ITM2B and TNF processing. Catalyzes the intramembrane cleavage of the anchored fragment of shed TNF-alpha (TNF), which promotes the release of the intracellular domain (ICD) for signaling to the nucleus. May play a role in the regulation of innate and adaptive immunity. This Mus musculus (Mouse) protein is Signal peptide peptidase-like 2B.